Consider the following 187-residue polypeptide: Peptidyl-tRNA hydrolase (187 aa).

A tRNA-binding site is contributed by tyrosine 18. Histidine 23 acts as the Proton acceptor in catalysis. TRNA contacts are provided by phenylalanine 65, asparagine 67, and asparagine 113.

It belongs to the PTH family. In terms of assembly, monomer.

It localises to the cytoplasm. It carries out the reaction an N-acyl-L-alpha-aminoacyl-tRNA + H2O = an N-acyl-L-amino acid + a tRNA + H(+). Its function is as follows. Hydrolyzes ribosome-free peptidyl-tRNAs (with 1 or more amino acids incorporated), which drop off the ribosome during protein synthesis, or as a result of ribosome stalling. In terms of biological role, catalyzes the release of premature peptidyl moieties from peptidyl-tRNA molecules trapped in stalled 50S ribosomal subunits, and thus maintains levels of free tRNAs and 50S ribosomes. In Coxiella burnetii (strain CbuK_Q154) (Coxiella burnetii (strain Q154)), this protein is Peptidyl-tRNA hydrolase.